Here is a 121-residue protein sequence, read N- to C-terminus: UPF0212 protein VNG_0879C (121 aa).

It belongs to the UPF0212 family.

This chain is UPF0212 protein VNG_0879C, found in Halobacterium salinarum (strain ATCC 700922 / JCM 11081 / NRC-1) (Halobacterium halobium).